A 150-amino-acid polypeptide reads, in one-letter code: Large ribosomal subunit protein bL9 (150 aa).

This sequence belongs to the bacterial ribosomal protein bL9 family.

In terms of biological role, binds to the 23S rRNA. The protein is Large ribosomal subunit protein bL9 of Shewanella sp. (strain MR-4).